A 295-amino-acid polypeptide reads, in one-letter code: Probable isochorismatase (295 aa).

The interval Met-1–Arg-21 is disordered. One can recognise a Carrier domain in the interval Glu-207 to Arg-286. Ser-247 is modified (O-(pantetheine 4'-phosphoryl)serine).

This sequence belongs to the isochorismatase family. The cofactor is pantetheine 4'-phosphate.

The enzyme catalyses isochorismate + H2O = (2S,3S)-2,3-dihydroxy-2,3-dihydrobenzoate + pyruvate. Its pathway is siderophore biosynthesis; vulnibactin biosynthesis. Functionally, involved in the biosynthesis of the catechol siderophore vulnibactin. Vulnibactin is a chelating compound involved in transporting iron from the bacterial environment into the cell cytoplasm. The sequence is that of Probable isochorismatase (venB) from Vibrio vulnificus (strain CMCP6).